Reading from the N-terminus, the 4171-residue chain is Cytoplasmic dynein 2 heavy chain 1 (4171 aa).

Residues 1-1598 are stem; that stretch reads MSSDSKDQRK…VLRQVSSEFE (1598 aa). Residue 115–122 coordinates ATP; the sequence is GKELTEGN. 5 coiled-coil regions span residues 164–203, 629–693, 829–861, 927–1048, and 1354–1383; these read ANDY…CDEL, KQLE…KEEE, DLEE…AERL, EIAE…KEKR, and SRQS…LEQK. 4 AAA regions span residues 1599-1823, 1883-2100, 2184-2432, and 2527-2767; these read YTYE…VLGG, EPLG…VRSH, VTKE…WVVS, and RFAF…PIKY. Residues 1637–1644, 1921–1928, 2226–2233, and 2565–2572 each bind ATP; these read GPAGTGKT, GAAGSGKS, GTTGCGKQ, and GRPGFGRR. Positions 2776 to 3064 are stalk; that stretch reads QLLGYKRLTL…VDLDREQDTI (289 aa). Coiled coils occupy residues 2790–2877, 2999–3059, and 3308–3336; these read ERLK…KEVQ, EKIA…DLDR, and ELEE…LLLQ. 2 AAA regions span residues 3140–3367 and 3575–3784; these read ASLE…IITK and LMDF…FVEQ.

This sequence belongs to the dynein heavy chain family. As to quaternary structure, the cytoplasmic dynein complex 2 is probably composed by a heavy chain che-3 homodimer and a number of light intermediate chains.

Its subcellular location is the cell projection. The protein localises to the cilium membrane. The protein resides in the cytoplasm. It localises to the cytoskeleton. Functionally, functions as a motor for intraflagellar retrograde transport in chemosensory neurons. Functions in cilia biogenesis. In Caenorhabditis elegans, this protein is Cytoplasmic dynein 2 heavy chain 1.